The sequence spans 303 residues: Tyrosine recombinase XerC (303 aa).

A Core-binding (CB) domain is found at 6–92 (ASLAPQVEAF…ALRSFLNWLV (87 aa)). The region spanning 113 to 292 (HLPKNIDVDE…DFQHLATVYD (180 aa)) is the Tyr recombinase domain. Active-site residues include arginine 152, lysine 176, histidine 244, arginine 247, and histidine 270. Tyrosine 279 (O-(3'-phospho-DNA)-tyrosine intermediate) is an active-site residue.

The protein belongs to the 'phage' integrase family. XerC subfamily. In terms of assembly, forms a cyclic heterotetrameric complex composed of two molecules of XerC and two molecules of XerD, in which XerC interacts with XerD via its C-terminal region, XerD interacts with XerC via its C-terminal region and so on.

It is found in the cytoplasm. Its activity is regulated as follows. FtsK may regulate the catalytic switch between XerC and XerD in the heterotetrameric complex during the two steps of the recombination process. Functionally, site-specific tyrosine recombinase, which acts by catalyzing the cutting and rejoining of the recombining DNA molecules. Binds cooperatively to specific DNA consensus sequences that are separated from XerD binding sites by a short central region, forming the heterotetrameric XerC-XerD complex that recombines DNA substrates. The complex is essential to convert dimers of the bacterial chromosome into monomers to permit their segregation at cell division. It also contributes to the segregational stability of plasmids. In the complex XerC specifically exchanges the top DNA strands. In Yersinia pestis, this protein is Tyrosine recombinase XerC.